Here is a 3930-residue protein sequence, read N- to C-terminus: Hybrid PKS-NRPS synthetase apdA (3930 aa).

The region spanning 2-440 (QDLIAIVGSA…GTNAHAIIEG (439 aa)) is the Ketosynthase family 3 (KS3) domain. Active-site for beta-ketoacyl synthase activity residues include cysteine 176, histidine 313, and histidine 361. Residues 557–879 (IFTGQGAQWA…MRRGDNEIEA (323 aa)) are malonyl-CoA:ACP transacylase (MAT) domain. Positions 948–1085 (HELLGRRVPD…GRLIINYGDP (138 aa)) are N-terminal hotdog fold. Positions 948-1251 (HELLGRRVPD…SMKSMSEPQP (304 aa)) are dehydratase (DH) domain. Positions 948–1252 (HELLGRRVPD…MKSMSEPQPE (305 aa)) constitute a PKS/mFAS DH domain. Histidine 980 (proton acceptor; for dehydratase activity) is an active-site residue. The tract at residues 1100–1252 (NVPVDMGRFY…MKSMSEPQPE (153 aa)) is C-terminal hotdog fold. The Proton donor; for dehydratase activity role is filled by aspartate 1159. The segment at 1389-1588 (QDDMLNRFYM…FSGLDCLAPD (200 aa)) is methyltransferase (MT) domain. Positions 2088-2229 (ATYLLAGMTG…SLASIIGNAA (142 aa)) are ketoreductase (KR) domain. In terms of domain architecture, Carrier 1 spans 2326 to 2403 (AVIPIVQEAF…QICEDAVRQF (78 aa)). Serine 2363 is modified (O-(pantetheine 4'-phosphoryl)serine). Disordered stretches follow at residues 2414–2433 (VAPNMTEKPETKSHPSSNAT) and 2444–2494 (DAAN…VDAD). The segment covering 2445 to 2473 (AANGDYESSSQGDDSRGNSSSSSSHTSPS) has biased composition (low complexity). Positions 2509 to 2937 (PASFAQSRLW…SLPVNQLPVT (429 aa)) are condensation (C) domain. Residues 2971–3371 (KSFPEETAIK…GTLIFMGRMD (401 aa)) are adenylation (A) (KR) domain. The reductase (RED) domain stretch occupies residues 2971 to 3371 (KSFPEETAIK…GTLIFMGRMD (401 aa)). In terms of domain architecture, Carrier 2 spans 3493 to 3572 (RHLSLAEGEL…QMARRISRRK (80 aa)). Serine 3532 carries the post-translational modification O-(pantetheine 4'-phosphoryl)serine.

The protein in the C-terminal section; belongs to the NRP synthetase family.

The protein operates within secondary metabolite biosynthesis. Its function is as follows. Hybrid PKS-NRPS synthetase; part of the gene cluster that mediates the biosynthesis of aspyridones. The polyketide-amino acid backbone preaspyridone A is first assembled by the PKS-NRPS hybrid apdA. The assembly of preaspyridone A is initiated by loading of malonyl-CoA onto apdA, followed by decarboxylation to yield the acetyl starter unit. The growing polyketide chain then elongates into a tetraketide. The adpA PKS module catalyzes three Claisen condensations, as well as beta-keto processing and methylation. Alpha-methylation step during polyketide synthesis is a prerequisite and a key checkpoint for chain transfer between PKS and NRPS modules. The downstream NRPS module contains the condensation (C), adenylation (A), and thiolation (T) domains and catalyzes the incorporation of tyrosine via the formation of the L-tyrosinyl-thioester and the amide linkage between L-tyrosinyl-thioester and the tetraketide. The bimodular assembly line is terminated with a reductase (R) domain that facilitates formation and release of the tetramic acid product. Because apdA lacks a designated enoylreductase (ER) domain, the required activity is provided the enoyl reductase apdC. ApdC appears to operate with different stereoselectivity in different PKS cycle. Combined with apdC, apdA is proposed to synthesize preaspyridone A via about 20 enzymatic steps. A number of oxidative steps performed successively by the cytochrome P450 monooxygenases apdE and apdB are required for the conversion of preaspyridone A to aspyridone A. The cytochrome P450 monooxygenase apdE is responsible for the oxidative dephenylation of preaspyridone A. Finally, the predicted FAD-dependent monooxygenase apdD and the acyl-CoA dehydrogenase apdG may be involved in the transformation of aspyridone A into aspyridone B. The sequence is that of Hybrid PKS-NRPS synthetase apdA from Emericella nidulans (strain FGSC A4 / ATCC 38163 / CBS 112.46 / NRRL 194 / M139) (Aspergillus nidulans).